The chain runs to 154 residues: Ascorbate-specific PTS system EIIA component (154 aa).

One can recognise a PTS EIIA type-2 domain in the interval S6–T150. H68 functions as the Tele-phosphohistidine intermediate in the catalytic mechanism. H68 is subject to Phosphohistidine.

Its subcellular location is the cytoplasm. Functionally, the phosphoenolpyruvate-dependent sugar phosphotransferase system (sugar PTS), a major carbohydrate active transport system, catalyzes the phosphorylation of incoming sugar substrates concomitantly with their translocation across the cell membrane. The enzyme II UlaABC PTS system is involved in ascorbate transport. This chain is Ascorbate-specific PTS system EIIA component (ulaC), found in Salmonella typhi.